We begin with the raw amino-acid sequence, 547 residues long: Glucose-6-phosphate isomerase (547 aa).

The Proton donor role is filled by Glu351. Catalysis depends on residues His382 and Lys509.

Belongs to the GPI family.

The protein localises to the cytoplasm. It carries out the reaction alpha-D-glucose 6-phosphate = beta-D-fructose 6-phosphate. It functions in the pathway carbohydrate biosynthesis; gluconeogenesis. It participates in carbohydrate degradation; glycolysis; D-glyceraldehyde 3-phosphate and glycerone phosphate from D-glucose: step 2/4. Its function is as follows. Catalyzes the reversible isomerization of glucose-6-phosphate to fructose-6-phosphate. The sequence is that of Glucose-6-phosphate isomerase from Coxiella burnetii (strain CbuG_Q212) (Coxiella burnetii (strain Q212)).